Consider the following 510-residue polypeptide: MSHLILNPGTLTLSQIREISRGKVSLELADSAINDINTSAGLVQQVLDEGRTVYGINTGFGLLANTKIAADDLQLLQRSIVLSHAAGTGQYMQDATVRLMMVLKINSLSRGFSGIRLEVINFLIALVNAEVYPCVPEKGSVGASGDLAPLAHMCLPLLGEGEMSYKGQILSAKEGLEIAGLKPIELAAKEGLALLNGTQASTALALEGLFNAEDLFAASSVIGAMSVEAAMGSRSPFDSRIHAARGQKGQIDSAALFRLLLGDESEISLSHVDCERVQDPYSLRCQPQVLGACLTQIRHAAEVLGTEANGVTDNPLVFQDTGDIISGGNFHAEPVAMAADNLAIALAELGSIAERRIALLIDPNLSMLPPFLVENGGVNSGFMIAQVTAAALASENKTYAHPASVDSLPTSANQEDHVSMATFAARRLRDMTENTRGVLAIELLASAQGLDFRAPLQPSVVVAKAKAEIRELVTYYDKDRFFGPDIEAATDLLITASFNAYLPDGILPSL.

Positions 143–145 (ASG) form a cross-link, 5-imidazolinone (Ala-Gly). The residue at position 144 (Ser-144) is a 2,3-didehydroalanine (Ser).

It belongs to the PAL/histidase family. In terms of processing, contains an active site 4-methylidene-imidazol-5-one (MIO), which is formed autocatalytically by cyclization and dehydration of residues Ala-Ser-Gly.

It is found in the cytoplasm. The catalysed reaction is L-histidine = trans-urocanate + NH4(+). The protein operates within amino-acid degradation; L-histidine degradation into L-glutamate; N-formimidoyl-L-glutamate from L-histidine: step 1/3. This Shewanella sediminis (strain HAW-EB3) protein is Histidine ammonia-lyase.